Reading from the N-terminus, the 120-residue chain is Large ribosomal subunit protein bL20 (120 aa).

Belongs to the bacterial ribosomal protein bL20 family.

Binds directly to 23S ribosomal RNA and is necessary for the in vitro assembly process of the 50S ribosomal subunit. It is not involved in the protein synthesizing functions of that subunit. This is Large ribosomal subunit protein bL20 from Chlamydia abortus (strain DSM 27085 / S26/3) (Chlamydophila abortus).